We begin with the raw amino-acid sequence, 633 residues long: Proline-rich receptor-like protein kinase PERK4 (633 aa).

Residues 1 to 29 are compositionally biased toward low complexity; sequence MASSPESAPPTNSTSSPSPPSNTNSTTSS. Residues 1 to 145 are disordered; it reads MASSPESAPP…GSSGGGGGGR (145 aa). Over 1 to 151 the chain is Extracellular; that stretch reads MASSPESAPP…GGGRSNTNTA (151 aa). N-linked (GlcNAc...) asparagine glycosylation is found at asparagine 12 and asparagine 24. Composition is skewed to pro residues over residues 30 to 41 and 48 to 65; these read PPAPSPPSPTPP and SPPP…PNPP. N-linked (GlcNAc...) asparagine glycosylation occurs at asparagine 66. Positions 77–90 are enriched in gly residues; the sequence is QGGGGERGNGGNNG. Over residues 106 to 135 the composition is skewed to low complexity; it reads SRSNGDNGGSRSSPPGDTGGSRSDNPPSSG. Over residues 136–145 the composition is skewed to gly residues; the sequence is GSSGGGGGGR. A helical transmembrane segment spans residues 152–172; sequence IIVGVLVGAGLLMIVLIIVCL. The Cytoplasmic portion of the chain corresponds to 173 to 633; the sequence is RRKKKRKDSF…MGTKSPTPPK (461 aa). The span at 193–222 shows a compositional bias: low complexity; sequence QYYGNNNNNNASQNYPNWHLNSQGQNQQST. Positions 193 to 255 are disordered; sequence QYYGNNNNNN…SMYSGPSRPV (63 aa). At threonine 273 the chain carries Phosphothreonine. Positions 284 to 562 constitute a Protein kinase domain; it reads FTDANLLGQG…VRALEGEVSL (279 aa). ATP contacts are provided by residues 290–298 and lysine 312; that span reads LGQGGFGYV. Tyrosine 357 is subject to Phosphotyrosine. Aspartate 408 acts as the Proton acceptor in catalysis. Position 441 is a phosphoserine (serine 441). Phosphothreonine is present on residues threonine 442 and threonine 447. Tyrosine 455 is subject to Phosphotyrosine. Polar residues predominate over residues 608-619; sequence FPVSDCEGTSSN. A disordered region spans residues 608 to 633; sequence FPVSDCEGTSSNDSRDMGTKSPTPPK.

It belongs to the protein kinase superfamily. Ser/Thr protein kinase family. Mostly expressed in inflorescence bolts. Also present in roots, stems, germinated seeds, cotyledons, pollen, stamen and stigma.

It localises to the cell membrane. The enzyme catalyses L-seryl-[protein] + ATP = O-phospho-L-seryl-[protein] + ADP + H(+). It catalyses the reaction L-threonyl-[protein] + ATP = O-phospho-L-threonyl-[protein] + ADP + H(+). Its activity is regulated as follows. Activated by ABA and Ca(2+). Required during abscisic acid (ABA)-mediated activation of Ca(2+) channels. Regulates ABA signaling pathways. Modulates the expression of genes related to cell elongation and ABA signaling during root growth. This Arabidopsis thaliana (Mouse-ear cress) protein is Proline-rich receptor-like protein kinase PERK4 (PERK4).